Reading from the N-terminus, the 78-residue chain is Protein M6 (78 aa).

This sequence belongs to the A9/FIL1 family. Tapetum of anthers.

The protein localises to the secreted. This chain is Protein M6 (M6), found in Lilium henryi (Henry's lily).